Here is a 200-residue protein sequence, read N- to C-terminus: dITP/XTP pyrophosphatase (200 aa).

Residue 8 to 13 (TGNQGK) coordinates substrate. Aspartate 69 (proton acceptor) is an active-site residue. Mg(2+) is bound at residue aspartate 69. Substrate is bound by residues serine 70, 154-157 (FGYD), lysine 177, and 182-183 (HR).

Belongs to the HAM1 NTPase family. Homodimer. Mg(2+) is required as a cofactor.

The catalysed reaction is XTP + H2O = XMP + diphosphate + H(+). The enzyme catalyses dITP + H2O = dIMP + diphosphate + H(+). It carries out the reaction ITP + H2O = IMP + diphosphate + H(+). Its function is as follows. Pyrophosphatase that catalyzes the hydrolysis of nucleoside triphosphates to their monophosphate derivatives, with a high preference for the non-canonical purine nucleotides XTP (xanthosine triphosphate), dITP (deoxyinosine triphosphate) and ITP. Seems to function as a house-cleaning enzyme that removes non-canonical purine nucleotides from the nucleotide pool, thus preventing their incorporation into DNA/RNA and avoiding chromosomal lesions. In Vibrio cholerae serotype O1 (strain ATCC 39315 / El Tor Inaba N16961), this protein is dITP/XTP pyrophosphatase.